We begin with the raw amino-acid sequence, 154 residues long: MPKGDGKLVAQNKKARHDYAIEETFEAGIVLQGTEIKSVRNARVNLKDSYARIDKGEIFLHNMHISPYEQGNRYNHDPLRTRKLLLHKKQISRLIGETKESGYSIVPLKMYIKDGYAKVLIGVARGKKKYDKRQDLKQKEAKRDIERAFKERQQ.

The segment at 131–154 (DKRQDLKQKEAKRDIERAFKERQQ) is disordered. The segment covering 132–154 (KRQDLKQKEAKRDIERAFKERQQ) has biased composition (basic and acidic residues).

Belongs to the SmpB family.

Its subcellular location is the cytoplasm. Required for rescue of stalled ribosomes mediated by trans-translation. Binds to transfer-messenger RNA (tmRNA), required for stable association of tmRNA with ribosomes. tmRNA and SmpB together mimic tRNA shape, replacing the anticodon stem-loop with SmpB. tmRNA is encoded by the ssrA gene; the 2 termini fold to resemble tRNA(Ala) and it encodes a 'tag peptide', a short internal open reading frame. During trans-translation Ala-aminoacylated tmRNA acts like a tRNA, entering the A-site of stalled ribosomes, displacing the stalled mRNA. The ribosome then switches to translate the ORF on the tmRNA; the nascent peptide is terminated with the 'tag peptide' encoded by the tmRNA and targeted for degradation. The ribosome is freed to recommence translation, which seems to be the essential function of trans-translation. This chain is SsrA-binding protein, found in Listeria innocua serovar 6a (strain ATCC BAA-680 / CLIP 11262).